Here is a 287-residue protein sequence, read N- to C-terminus: uncharacterized protein (287 aa).

Positions 1–23 are disordered; that stretch reads MTVSDSPAQRQTPPQTPGGTAPR. A compositionally biased stretch (low complexity) spans 7 to 23; it reads PAQRQTPPQTPGGTAPR. Positions 31, 33, and 204 each coordinate Mg(2+).

Belongs to the HAD-like hydrolase superfamily. SerB family.

This is an uncharacterized protein from Mycobacterium tuberculosis (strain CDC 1551 / Oshkosh).